Reading from the N-terminus, the 355-residue chain is C-C chemokine receptor type 3 (355 aa).

At 1-34 the chain is on the extracellular side; that stretch reads MTTSLDTVETFGPTSYDDDMGLLCEKADVGALIA. The helical transmembrane segment at 35-62 threads the bilayer; sequence QFVPPLYSLVFMVGLLGNVVVVMILIKY. Residues 63–72 lie on the Cytoplasmic side of the membrane; the sequence is RRLRIMTNIY. The helical transmembrane segment at 73–93 threads the bilayer; it reads LLNLAISDLLFLFTLPFWIHY. Over 94–107 the chain is Extracellular; the sequence is VRERNWVFSHGMCK. A disulfide bond links Cys106 and Cys183. A helical transmembrane segment spans residues 108–129; that stretch reads VLSGFYHTGLYSEIFFIILLTI. Over 130 to 146 the chain is Cytoplasmic; the sequence is DRYLAIVHAVFALRART. Residues 147-171 traverse the membrane as a helical segment; the sequence is VTFGVITSIVTWGLAVLAALPEFIF. The Extracellular segment spans residues 172–203; the sequence is YGTEKLFPKTLCSAIYPQDTVYSWRHFHTLKM. Residues 204–223 form a helical membrane-spanning segment; the sequence is TILCLALPLLVMAICYTGII. At 224 to 239 the chain is on the cytoplasmic side; it reads KTLLRCPSKKKYKAIR. Residues 240–264 form a helical membrane-spanning segment; the sequence is LIFVIMAVFFIFWTPYNVAILISTY. Residues 265 to 281 are Extracellular-facing; sequence QSVLFGLDCERSKHLDL. A helical membrane pass occupies residues 282–305; sequence FVLATEVIAYSHCCVNPVIYAFVG. Topologically, residues 306-355 are cytoplasmic; the sequence is ERFRKYLRHFFHRHVLMHLGKYIPFLPSEKLERTSSVSPSTAEPELSIVF.

This sequence belongs to the G-protein coupled receptor 1 family.

It localises to the cell membrane. Receptor for C-C type chemokine. Binds and responds to a variety of chemokines, including CCL11, CCL26, CCL7, CCL13, RANTES(CCL5) and CCL15. Subsequently transduces a signal by increasing the intracellular calcium ions level. In addition acts as a possible functional receptor for NARS1. This Macaca mulatta (Rhesus macaque) protein is C-C chemokine receptor type 3 (CCR3).